We begin with the raw amino-acid sequence, 305 residues long: MDFVKQFLYSCDHMGFLALTQETWQNRWFPSQISLTSDVACLQSLNPRDLEFYKFLFSFLAMAEKLVNFNIQALVADFHSHDLEHYYTEQEAMENIHGKVYANILNMFFKNNVGEMQKYAREIVGDEALAAKLHWLHGRVSEAKTRAEKVLVFLLIEGIFFISSFYSIATLRVRGLMNGVCMANDYISRDEWVHTRAAALLFNTLVPDEEKPSPEWIGALFREAVEVEYNFILAKGRGVSHVNVADINRFLEATADRILKSINVGPVYGTQPPPNCPLVYTGCLKNVNFFERESSDYTTAVDNDL.

Positions 64, 94, and 97 each coordinate Fe cation. Tyrosine 101 is a catalytic residue. A helical membrane pass occupies residues 150 to 170; it reads VLVFLLIEGIFFISSFYSIAT. Residues glutamate 157, glutamate 191, and histidine 194 each contribute to the Fe cation site.

This sequence belongs to the ribonucleoside diphosphate reductase small chain family. In terms of assembly, heterotetramer composed of a homodimer of the large subunit (R1) and a homodimer of the small subunit (R2). Larger multisubunit protein complex are also active, composed of (R1)n(R2)n. Fe cation serves as cofactor.

It localises to the host membrane. It catalyses the reaction a 2'-deoxyribonucleoside 5'-diphosphate + [thioredoxin]-disulfide + H2O = a ribonucleoside 5'-diphosphate + [thioredoxin]-dithiol. Its function is as follows. Ribonucleoside-diphosphate reductase holoenzyme provides the precursors necessary for viral DNA synthesis. Allows virus growth in non-dividing cells, as well as reactivation from latency in infected hosts. Catalyzes the biosynthesis of deoxyribonucleotides from the corresponding ribonucleotides. This is Ribonucleoside-diphosphate reductase small subunit from Equus caballus (Horse).